A 71-amino-acid chain; its full sequence is Small ribosomal subunit protein bS21 (71 aa).

Residues Tyr38 to Tyr71 are disordered. The segment covering Lys46–Lys59 has biased composition (basic residues). The span at Leu60–Tyr71 shows a compositional bias: basic and acidic residues.

It belongs to the bacterial ribosomal protein bS21 family.

The sequence is that of Small ribosomal subunit protein bS21 from Hamiltonella defensa subsp. Acyrthosiphon pisum (strain 5AT).